The primary structure comprises 522 residues: Solute carrier family 2, facilitated glucose transporter member 2 (522 aa).

The Cytoplasmic portion of the chain corresponds to 1–10 (MSEDKITGTL). A helical transmembrane segment spans residues 11-31 (AFTVFTAVLGSFQFGYDIGVI). The Extracellular portion of the chain corresponds to 32-96 (NAPQEVIISH…SAHIVTMLWS (65 aa)). An N-linked (GlcNAc...) asparagine glycan is attached at Asn-62. Residues 97-117 (LSVSSFAVGGMVASFFGGWLG) form a helical membrane-spanning segment. The Cytoplasmic portion of the chain corresponds to 118–125 (DKLGRIKA). The helical transmembrane segment at 126–146 (MLAANSLSLTGALLMGCSKFG) threads the bilayer. Residues 147–156 (PAHALIIAGR) lie on the Extracellular side of the membrane. The helical transmembrane segment at 157–177 (SVSGLYCGLISGLVPMYIGEI) threads the bilayer. Residues 178–185 (APTTLRGA) lie on the Cytoplasmic side of the membrane. Residues 186-206 (LGTLHQLALVTGILISQIAGL) form a helical membrane-spanning segment. Residue Gln-191 coordinates D-glucose. The Extracellular portion of the chain corresponds to 207 to 215 (SFILGNQDY). A helical membrane pass occupies residues 216–236 (WHILLGLSAVPALLQCLLLLF). The Cytoplasmic portion of the chain corresponds to 237-301 (CPESPRYLYL…LFTDPNYRQP (65 aa)). The chain crosses the membrane as a helical span at residues 302-322 (IVVALMLHLAQQFSGINGIFY). D-glucose is bound by residues 312 to 313 (QQ) and Asn-318. The Extracellular portion of the chain corresponds to 323–337 (YSTSIFQTAGISQPV). The chain crosses the membrane as a helical span at residues 338 to 358 (YATIGVGAINMIFTAVSVLLV). A D-glucose-binding site is contributed by Asn-347. Residues 359 to 365 (EKAGRRT) are Cytoplasmic-facing. A helical membrane pass occupies residues 366-386 (LFLAGMIGMFFCAVFMSLGLV). Residues 387-401 (LLDKFTWMSYVSMTA) are Extracellular-facing. A helical membrane pass occupies residues 402 to 422 (IFLFVSFFEIGPGPIPWFMVA). Residues Glu-410 and Trp-418 each contribute to the D-glucose site. Residues 423–431 (EFFSQGPRP) lie on the Cytoplasmic side of the membrane. A helical transmembrane segment spans residues 432-452 (TALALAAFSNWVCNFIIALCF). Residues 453–459 (QYIADFL) are Extracellular-facing. The chain crosses the membrane as a helical span at residues 460 to 480 (GPYVFFLFAGVVLVFTLFTFF). The Cytoplasmic portion of the chain corresponds to 481–522 (KVPETKGKSFDEIAAEFRKKSGSAPPRKATVQMEFLGSSETV). Thr-521 bears the Phosphothreonine mark.

Belongs to the major facilitator superfamily. Sugar transporter (TC 2.A.1.1) family. Glucose transporter subfamily. Post-translationally, N-glycosylated; required for stability and retention at the cell surface of pancreatic beta cells. As to expression, present in liver, intestine, kidney and beta-pancreatic islet cells.

Its subcellular location is the cell membrane. The enzyme catalyses D-glucose(out) = D-glucose(in). It carries out the reaction D-fructose(out) = D-fructose(in). It catalyses the reaction L-dehydroascorbate(out) = L-dehydroascorbate(in). The catalysed reaction is D-galactose(in) = D-galactose(out). With respect to regulation, D-glucose and maltose competitively inhibit fructose transport. D-glucose, D-fructose and maltose inhibit deoxyglucose transport. Functionally, facilitative hexose transporter that mediates the transport of glucose, fructose and galactose. Likely mediates the bidirectional transfer of glucose across the plasma membrane of hepatocytes and is responsible for uptake of glucose by the beta cells; may comprise part of the glucose-sensing mechanism of the beta cell. May also participate with the Na(+)/glucose cotransporter in the transcellular transport of glucose in the small intestine and kidney. Also able to mediate the transport of dehydroascorbate. The polypeptide is Solute carrier family 2, facilitated glucose transporter member 2 (Rattus norvegicus (Rat)).